A 240-amino-acid polypeptide reads, in one-letter code: Ribonuclease PH (240 aa).

Residues Arg87 and 125–127 contribute to the phosphate site; that span reads GTR.

Belongs to the RNase PH family. As to quaternary structure, homohexameric ring arranged as a trimer of dimers.

It carries out the reaction tRNA(n+1) + phosphate = tRNA(n) + a ribonucleoside 5'-diphosphate. Phosphorolytic 3'-5' exoribonuclease that plays an important role in tRNA 3'-end maturation. Removes nucleotide residues following the 3'-CCA terminus of tRNAs; can also add nucleotides to the ends of RNA molecules by using nucleoside diphosphates as substrates, but this may not be physiologically important. Probably plays a role in initiation of 16S rRNA degradation (leading to ribosome degradation) during starvation. The sequence is that of Ribonuclease PH from Pseudomonas fluorescens (strain SBW25).